Consider the following 185-residue polypeptide: Translation initiation factor IF-3 (185 aa).

This sequence belongs to the IF-3 family. As to quaternary structure, monomer.

It localises to the cytoplasm. In terms of biological role, IF-3 binds to the 30S ribosomal subunit and shifts the equilibrium between 70S ribosomes and their 50S and 30S subunits in favor of the free subunits, thus enhancing the availability of 30S subunits on which protein synthesis initiation begins. The protein is Translation initiation factor IF-3 of Rickettsia typhi (strain ATCC VR-144 / Wilmington).